An 858-amino-acid polypeptide reads, in one-letter code: DNA mismatch repair protein MutS (858 aa).

Residue 611–618 (GPNMGGKS) coordinates ATP.

It belongs to the DNA mismatch repair MutS family.

Its function is as follows. This protein is involved in the repair of mismatches in DNA. It is possible that it carries out the mismatch recognition step. This protein has a weak ATPase activity. This chain is DNA mismatch repair protein MutS, found in Actinobacillus succinogenes (strain ATCC 55618 / DSM 22257 / CCUG 43843 / 130Z).